The chain runs to 995 residues: UPF0182 protein MMAR_1371 (995 aa).

7 helical membrane passes run 18–38 (VLIL…RLID), 63–83 (FLVF…GLAL), 113–133 (LFGI…AQSY), 175–195 (FVAI…FGGI), 210–230 (IQLV…YWLD), 259–279 (KLIL…AIVL), and 287–307 (IGLV…PMIV). A disordered region spans residues 900 to 948 (AATGIQPTEGGAPANVPPNNAPSPEALPGTPPSPPTAVPPAPEASVTLS). Residues 928 to 941 (GTPPSPPTAVPPAP) are compositionally biased toward pro residues.

Belongs to the UPF0182 family.

The protein localises to the cell membrane. This is UPF0182 protein MMAR_1371 from Mycobacterium marinum (strain ATCC BAA-535 / M).